Reading from the N-terminus, the 447-residue chain is Na(+)-translocating NADH-quinone reductase subunit A (447 aa).

This sequence belongs to the NqrA family. Composed of six subunits; NqrA, NqrB, NqrC, NqrD, NqrE and NqrF.

It catalyses the reaction a ubiquinone + n Na(+)(in) + NADH + H(+) = a ubiquinol + n Na(+)(out) + NAD(+). Its function is as follows. NQR complex catalyzes the reduction of ubiquinone-1 to ubiquinol by two successive reactions, coupled with the transport of Na(+) ions from the cytoplasm to the periplasm. NqrA to NqrE are probably involved in the second step, the conversion of ubisemiquinone to ubiquinol. This chain is Na(+)-translocating NADH-quinone reductase subunit A, found in Photorhabdus laumondii subsp. laumondii (strain DSM 15139 / CIP 105565 / TT01) (Photorhabdus luminescens subsp. laumondii).